Consider the following 1901-residue polypeptide: A-kinase anchor protein 11 (1901 aa).

Ser-18, Ser-422, Ser-433, Ser-444, and Ser-448 each carry phosphoserine. The disordered stretch occupies residues 407–443 (ALPANVRKPTPRKPESPYGNLCDAPDSPRPVKASRED). Disordered regions lie at residues 843 to 864 (NPGNQNDFKPTNDDIEMQSSSK) and 971 to 993 (LPVSGEESQLTPEKSPKFPDSQN). Thr-981 and Thr-1100 each carry phosphothreonine. The tract at residues 1131-1153 (EFAPATPPSTPHNSSVGSLSENE) is disordered. Residues 1141–1153 (PHNSSVGSLSENE) show a composition bias toward polar residues. Ser-1171, Ser-1176, Ser-1177, Ser-1242, and Ser-1337 each carry phosphoserine. Residue Thr-1485 is modified to Phosphothreonine. The residue at position 1580 (Ser-1580) is a Phosphoserine. The PKA-RII subunit binding domain stretch occupies residues 1650-1663 (LAEKIVAEAIEKAE). The disordered stretch occupies residues 1708-1805 (KEIEDFQSTE…HEDEVEGLGQ (98 aa)). The segment covering 1713-1740 (FQSTESVSSQQMNLSIGDDSTGSWSNLS) has biased composition (polar residues). A compositionally biased stretch (basic and acidic residues) spans 1747–1756 (DESSSFHHLS). Residues 1757-1772 (ESNGNSSSWSSLGLEG) are compositionally biased toward low complexity. A compositionally biased stretch (acidic residues) spans 1787-1801 (DGPDDKDEEHEDEVE).

It belongs to the AKAP110 family. As to expression, expressed in heart, brain, lung, liver, kidney, testis and ovary. Weakly expressed in skeletal muscle, pancreas and spleen.

It is found in the cytoplasm. The protein localises to the cytoskeleton. The protein resides in the microtubule organizing center. It localises to the centrosome. In terms of biological role, binds to type II regulatory subunits of protein kinase A and anchors/targets them. The sequence is that of A-kinase anchor protein 11 (AKAP11) from Homo sapiens (Human).